Reading from the N-terminus, the 2455-residue chain is Ectopic P granules protein 5 homolog (2455 aa).

The segment at 1 to 42 is disordered; it reads MATLEKPKKEKSKKSRNRVPIEKEEEEPAELSTSEEQRPAEN. S44 is subject to Phosphoserine. The interval 77-105 is disordered; sequence VTSQEPEGTQEPTETEAQPSAPSAPPSTT. Over residues 80–97 the composition is skewed to low complexity; sequence QEPEGTQEPTETEAQPSA. Position 467 is a phosphoserine (S467).

Belongs to the EPG5 family.

It is found in the cytoplasm. The protein localises to the perinuclear region. The protein resides in the lysosome. Functionally, involved in autophagy. Plays a role in late steps of autophagy. The polypeptide is Ectopic P granules protein 5 homolog (Drosophila melanogaster (Fruit fly)).